Here is a 122-residue protein sequence, read N- to C-terminus: MIQTESRLQVADNTGASEVLCIKVLGGSKRRYASIGDVIKVSVKSAAPRGRVKKGDIYNAVVVRTAKGVRRPDGSLIKFDANAAVLLNAKLEPIGTRIFGPVTRELRTEKFMKIVSLAPEVI.

The protein belongs to the universal ribosomal protein uL14 family. In terms of assembly, part of the 50S ribosomal subunit. Forms a cluster with proteins L3 and L19. In the 70S ribosome, L14 and L19 interact and together make contacts with the 16S rRNA in bridges B5 and B8.

Binds to 23S rRNA. Forms part of two intersubunit bridges in the 70S ribosome. The polypeptide is Large ribosomal subunit protein uL14 (Polynucleobacter asymbioticus (strain DSM 18221 / CIP 109841 / QLW-P1DMWA-1) (Polynucleobacter necessarius subsp. asymbioticus)).